Reading from the N-terminus, the 174-residue chain is 2-C-methyl-D-erythritol 2,4-cyclodiphosphate synthase (174 aa).

Residues Asp-13, His-15, and His-61 each contribute to the a divalent metal cation site. 4-CDP-2-C-methyl-D-erythritol 2-phosphate is bound at residue 13–15 (DAH). Residues 75–77 (DIG), 149–152 (TTTD), Phe-156, and Arg-159 each bind 4-CDP-2-C-methyl-D-erythritol 2-phosphate.

Belongs to the IspF family. As to quaternary structure, homotrimer. The cofactor is a divalent metal cation.

The catalysed reaction is 4-CDP-2-C-methyl-D-erythritol 2-phosphate = 2-C-methyl-D-erythritol 2,4-cyclic diphosphate + CMP. It functions in the pathway isoprenoid biosynthesis; isopentenyl diphosphate biosynthesis via DXP pathway; isopentenyl diphosphate from 1-deoxy-D-xylulose 5-phosphate: step 4/6. In terms of biological role, involved in the biosynthesis of isopentenyl diphosphate (IPP) and dimethylallyl diphosphate (DMAPP), two major building blocks of isoprenoid compounds. Catalyzes the conversion of 4-diphosphocytidyl-2-C-methyl-D-erythritol 2-phosphate (CDP-ME2P) to 2-C-methyl-D-erythritol 2,4-cyclodiphosphate (ME-CPP) with a corresponding release of cytidine 5-monophosphate (CMP). This chain is 2-C-methyl-D-erythritol 2,4-cyclodiphosphate synthase, found in Bifidobacterium longum subsp. infantis (strain ATCC 15697 / DSM 20088 / JCM 1222 / NCTC 11817 / S12).